The following is a 210-amino-acid chain: Probable nicotinate-nucleotide adenylyltransferase (210 aa).

Belongs to the NadD family.

It catalyses the reaction nicotinate beta-D-ribonucleotide + ATP + H(+) = deamido-NAD(+) + diphosphate. The protein operates within cofactor biosynthesis; NAD(+) biosynthesis; deamido-NAD(+) from nicotinate D-ribonucleotide: step 1/1. In terms of biological role, catalyzes the reversible adenylation of nicotinate mononucleotide (NaMN) to nicotinic acid adenine dinucleotide (NaAD). The protein is Probable nicotinate-nucleotide adenylyltransferase of Methylococcus capsulatus (strain ATCC 33009 / NCIMB 11132 / Bath).